Here is a 188-residue protein sequence, read N- to C-terminus: Holliday junction branch migration complex subunit RuvA (188 aa).

The domain I stretch occupies residues Met1 to Leu62. The segment at Glu63 to Ile135 is domain II. The flexible linker stretch occupies residues Ile135–Glu139. Residues Pro140–Ile188 are domain III.

This sequence belongs to the RuvA family. In terms of assembly, homotetramer. Forms an RuvA(8)-RuvB(12)-Holliday junction (HJ) complex. HJ DNA is sandwiched between 2 RuvA tetramers; dsDNA enters through RuvA and exits via RuvB. An RuvB hexamer assembles on each DNA strand where it exits the tetramer. Each RuvB hexamer is contacted by two RuvA subunits (via domain III) on 2 adjacent RuvB subunits; this complex drives branch migration. In the full resolvosome a probable DNA-RuvA(4)-RuvB(12)-RuvC(2) complex forms which resolves the HJ.

It localises to the cytoplasm. In terms of biological role, the RuvA-RuvB-RuvC complex processes Holliday junction (HJ) DNA during genetic recombination and DNA repair, while the RuvA-RuvB complex plays an important role in the rescue of blocked DNA replication forks via replication fork reversal (RFR). RuvA specifically binds to HJ cruciform DNA, conferring on it an open structure. The RuvB hexamer acts as an ATP-dependent pump, pulling dsDNA into and through the RuvAB complex. HJ branch migration allows RuvC to scan DNA until it finds its consensus sequence, where it cleaves and resolves the cruciform DNA. This chain is Holliday junction branch migration complex subunit RuvA, found in Sulfurimonas denitrificans (strain ATCC 33889 / DSM 1251) (Thiomicrospira denitrificans (strain ATCC 33889 / DSM 1251)).